A 635-amino-acid polypeptide reads, in one-letter code: Very-long-chain aldehyde decarbonylase GL1-6 (635 aa).

The next 4 helical transmembrane spans lie at 46 to 66, 100 to 120, 127 to 147, and 183 to 203; these read LLNF…QLWI, IILT…AQVA, GMVV…YWLH, and VVYF…GTVS. Positions 139 to 273 constitute a Fatty acid hydroxylase domain; sequence VEFLYYWLHR…MPVYDYIYGT (135 aa).

It belongs to the sterol desaturase family. Homodimer.

Its subcellular location is the endoplasmic reticulum membrane. It carries out the reaction a long-chain fatty aldehyde + 2 NADPH + O2 + H(+) = a long-chain alkane + formate + 2 NADP(+) + H2O. Functionally, aldehyde decarbonylase involved in the conversion of aldehydes to alkanes. Core component of a very-long-chain alkane synthesis complex. The protein is Very-long-chain aldehyde decarbonylase GL1-6 of Oryza sativa subsp. indica (Rice).